A 465-amino-acid chain; its full sequence is A-type ATP synthase subunit B (465 aa).

It belongs to the ATPase alpha/beta chains family. As to quaternary structure, has multiple subunits with at least A(3), B(3), C, D, E, F, H, I and proteolipid K(x).

It is found in the cell membrane. Component of the A-type ATP synthase that produces ATP from ADP in the presence of a proton gradient across the membrane. The B chain is a regulatory subunit. This chain is A-type ATP synthase subunit B, found in Pyrococcus horikoshii (strain ATCC 700860 / DSM 12428 / JCM 9974 / NBRC 100139 / OT-3).